The primary structure comprises 329 residues: Malate dehydrogenase (329 aa).

12–18 (GAAGQIG) lines the NAD(+) pocket. Substrate contacts are provided by arginine 95 and arginine 101. NAD(+) contacts are provided by residues asparagine 108, glutamine 115, and 132 to 134 (VGN). 2 residues coordinate substrate: asparagine 134 and arginine 165. Histidine 190 acts as the Proton acceptor in catalysis.

Belongs to the LDH/MDH superfamily. MDH type 2 family.

It carries out the reaction (S)-malate + NAD(+) = oxaloacetate + NADH + H(+). Catalyzes the reversible oxidation of malate to oxaloacetate. In Herminiimonas arsenicoxydans, this protein is Malate dehydrogenase.